The following is a 409-amino-acid chain: Tryptophan synthase beta chain (409 aa).

Lys-98 bears the N6-(pyridoxal phosphate)lysine mark.

The protein belongs to the TrpB family. In terms of assembly, tetramer of two alpha and two beta chains. Requires pyridoxal 5'-phosphate as cofactor.

The catalysed reaction is (1S,2R)-1-C-(indol-3-yl)glycerol 3-phosphate + L-serine = D-glyceraldehyde 3-phosphate + L-tryptophan + H2O. Its pathway is amino-acid biosynthesis; L-tryptophan biosynthesis; L-tryptophan from chorismate: step 5/5. The beta subunit is responsible for the synthesis of L-tryptophan from indole and L-serine. The polypeptide is Tryptophan synthase beta chain (trpB) (Cereibacter sphaeroides (strain ATCC 17023 / DSM 158 / JCM 6121 / CCUG 31486 / LMG 2827 / NBRC 12203 / NCIMB 8253 / ATH 2.4.1.) (Rhodobacter sphaeroides)).